The sequence spans 196 residues: MTTRKCNKFRKTSESEISLSLNLDGEGKSNIDTGIGFLNHMLNLMTKHGFLDLDIKAIGDLEVDAHHTVEDIGIVLGKALKEALGNKEKIKRYGTCFLPMDESLAFVSIDISGRAFLVYNCEFTVDKVGDMDTELVEEFLRAFAFNSEITLHTKILYGKNNHHMIEAIFKALGRAIKEAVLIDEKIKGVMSTKGII.

The protein belongs to the imidazoleglycerol-phosphate dehydratase family.

The protein localises to the cytoplasm. It carries out the reaction D-erythro-1-(imidazol-4-yl)glycerol 3-phosphate = 3-(imidazol-4-yl)-2-oxopropyl phosphate + H2O. It participates in amino-acid biosynthesis; L-histidine biosynthesis; L-histidine from 5-phospho-alpha-D-ribose 1-diphosphate: step 6/9. The protein is Imidazoleglycerol-phosphate dehydratase of Clostridium novyi (strain NT).